We begin with the raw amino-acid sequence, 370 residues long: Alpha-(1,3)-fucosyltransferase 7 (370 aa).

At 1 to 36 (MVQGCLCWRGCCDLKTSFPWVTNSRRLWMNCIGCNP) the chain is on the cytoplasmic side. The chain crosses the membrane as a helical; Signal-anchor for type II membrane protein span at residues 37–59 (VWRLRAWGCLAGGTTLMVIWLFW). Over 60–370 (LLRSVPGGAP…YEDLESWFQA (311 aa)) the chain is Lumenal. N-linked (GlcNAc...) asparagine glycosylation is present at Asn86. A disulfide bond links Cys96 and Cys104. An N-linked (GlcNAc...) asparagine glycan is attached at Asn109. A disulfide bridge connects residues Cys239 and Cys242. N-linked (GlcNAc...) asparagine glycosylation occurs at Asn319. Cys346 and Cys349 are joined by a disulfide.

It belongs to the glycosyltransferase 10 family. N-glycosylated. In terms of tissue distribution, expressed in lymph node and kidney.

The protein resides in the golgi apparatus. It localises to the golgi stack membrane. The catalysed reaction is an N-acetyl-alpha-neuraminyl-(2-&gt;3)-beta-D-galactosyl-(1-&gt;4)-N-acetyl-beta-D-glucosaminyl derivative + GDP-beta-L-fucose = an alpha-Neu5Ac-(2-&gt;3)-beta-D-Gal-(1-&gt;4)-[alpha-L-Fuc-(1-&gt;3)]-beta-D-GlcNAc derivative + GDP + H(+). It catalyses the reaction a neolactoside IV(3)-alpha-NeuAc-nLc4Cer + GDP-beta-L-fucose = a neolactoside IV(3)-alpha-NeuNAc,III(3)-alpha-Fuc-nLc4Cer + GDP + H(+). The enzyme catalyses a neolactoside VI(3)-alpha-NeuNAc-nLc6Cer + GDP-beta-L-fucose = a neolactoside VI(3)-alpha-NeuAc,V(3)-alphaFuc-nLc6Cer + GDP + H(+). It carries out the reaction an alpha-Neu5Ac-(2-&gt;3)-beta-D-Gal-(1-&gt;4)-beta-D-GlcNAc-(1-&gt;3)-beta-D-Gal-(1-&gt;4)-[alpha-L-Fuc-(1-&gt;3)]-beta-D-GlcNAc derivative + GDP-beta-L-fucose = an alpha-Neu5Ac-(2-&gt;3)-beta-D-Gal-(1-&gt;4)-[alpha-L-Fuc-(1-&gt;3)]-beta-D-GlcNAc-(1-&gt;3)-beta-D-Gal-(1-&gt;4)-[alpha-L-Fuc-(1-&gt;3)]-beta-D-GlcNAc derivative + GDP + H(+). The catalysed reaction is an alpha-Neu5Ac-(2-&gt;3)-beta-D-Gal-(1-&gt;4)-beta-D-GlcNAc6S derivative + GDP-beta-L-fucose = an alpha-Neu5Ac-(2-&gt;3)-beta-D-Gal-(1-&gt;4)-[alpha-L-Fuc-(1-&gt;3)]-beta-D-GlcNAc6S derivative + GDP + H(+). It catalyses the reaction alpha-Neu5Ac-(2-&gt;3)-beta-D-Gal-(1-&gt;4)-beta-D-GlcNAc-(1-&gt;3)-beta-D-Gal-(1-&gt;4)-D-Glc + GDP-beta-L-fucose = alpha-Neu5Ac-(2-&gt;3)-beta-D-Gal-(1-&gt;4)-[alpha-L-Fuc-(1-&gt;3)]-beta-D-GlcNAc-(1-&gt;3)-beta-D-Gal-(1-&gt;4)-D-Glc + GDP + H(+). The enzyme catalyses alpha-Neu5Ac-(2-&gt;3)-beta-D-Gal-(1-&gt;4)-beta-D-GlcNAc-(1-&gt;3)-beta-D-Gal-(1-&gt;4)-[alpha-L-Fuc-(1-&gt;3)]-beta-D-GlcNAc-(1-&gt;3)-beta-D-Gal-(1-&gt;4)-beta-D-GlcNAc + GDP-beta-L-fucose = alpha-Neu5Ac-(2-&gt;3)-beta-D-Gal-(1-&gt;4)-[alpha-L-Fuc-(1-&gt;3)]-beta-D-GlcNAc-(1-&gt;3)-beta-D-Gal-(1-&gt;4)-[alpha-L-Fuc-(1-&gt;3)]-beta-D-GlcNAc-(1-&gt;3)-beta-D-Gal-(1-&gt;4)-beta-D-GlcNAc + GDP + H(+). It carries out the reaction alpha-Neu5Ac-(2-&gt;3)-beta-D-Gal-(1-&gt;4)-beta-D-GlcNAc-(1-&gt;3)-beta-D-Gal-(1-&gt;4)-beta-D-GlcNAc-(1-&gt;3)-beta-D-Gal-(1-&gt;4)-beta-D-GlcNAc + GDP-beta-L-fucose = alpha-Neu5Ac-(2-&gt;3)-beta-D-Gal-(1-&gt;4)-[alpha-L-Fuc-(1-&gt;3)]-beta-D-GlcNAc-(1-&gt;3)-beta-D-Gal-(1-&gt;4)-beta-D-GlcNAc-(1-&gt;3)-beta-D-Gal-(1-&gt;4)-beta-D-GlcNAc + GDP + H(+). It functions in the pathway protein modification; protein glycosylation. Inhibited by NaCl. Inhibited by GDP in a concentration dependent manner, with an IC(50) value of 93 uM. Also inhibited by GMP and GTP. Inhibited by N-ethylmaleimide. Activated by poly(ethylene glycol) by enhancing the thermal stability of FUT7. Activated by Mn2+, Ca2+, and Mg2+. Both panosialin A and B inhibit activity with IC(50) values of 4.8 and 5.3 ug/ml, respectively. Inhibited by gallic acid (GA) and (-)-epigallocatechin gallate (EGCG) in a time-dependent and irreversible manner with IC(50) values of 60 and 700 nM, respectively. Its function is as follows. Catalyzes the transfer of L-fucose, from a guanosine diphosphate-beta-L-fucose, to the N-acetyl glucosamine (GlcNAc) of a distal alpha2,3 sialylated lactosamine unit of a glycoprotein or a glycolipid-linked sialopolylactosamines chain through an alpha-1,3 glycosidic linkage and participates in the final fucosylation step in the biosynthesis of the sialyl Lewis X (sLe(x)), a carbohydrate involved in cell and matrix adhesion during leukocyte trafficking and fertilization. In vitro, also synthesizes sialyl-dimeric-Lex structures, from VIM-2 structures and both di-fucosylated and trifucosylated structures from mono-fucosylated precursors. However does not catalyze alpha 1-3 fucosylation when an internal alpha 1-3 fucosylation is present in polylactosamine chain and the fucosylation rate of the internal GlcNAc residues is reduced once fucose has been added to the distal GlcNAc. Also catalyzes the transfer of a fucose from GDP-beta-fucose to the 6-sulfated a(2,3)sialylated substrate to produce 6-sulfo sLex mediating significant L-selectin-dependent cell adhesion. Through sialyl-Lewis(x) biosynthesis, can control SELE- and SELP-mediated cell adhesion with leukocytes and allows leukocytes tethering and rolling along the endothelial tissue thereby enabling the leukocytes to accumulate at a site of inflammation. May enhance embryo implantation through sialyl Lewis X (sLeX)-mediated adhesion of embryo cells to endometrium. May affect insulin signaling by up-regulating the phosphorylation and expression of some signaling molecules involved in the insulin-signaling pathway through SLe(x) which is present on the glycans of the INSRR alpha subunit. This Rattus norvegicus (Rat) protein is Alpha-(1,3)-fucosyltransferase 7.